Consider the following 275-residue polypeptide: Penicillin-insensitive murein endopeptidase (275 aa).

An N-terminal signal peptide occupies residues 1–19; sequence MKNWIVGMVALVTMVPVMA. 3 disulfides stabilise this stretch: Cys44–Cys264, Cys187–Cys235, and Cys216–Cys223. His110, His113, Asp120, Asp147, and His211 together coordinate Zn(2+). A disordered region spans residues 227–262; sequence DTPPPGDGCGAELESWFQPPPPSAKPGKTLPPPLPP. Pro residues predominate over residues 244 to 262; that stretch reads QPPPPSAKPGKTLPPPLPP.

This sequence belongs to the peptidase M74 family. As to quaternary structure, dimer. It depends on Zn(2+) as a cofactor.

The protein localises to the periplasm. Its function is as follows. Murein endopeptidase that cleaves the D-alanyl-meso-2,6-diamino-pimelyl amide bond that connects peptidoglycan strands. Likely plays a role in the removal of murein from the sacculus. This Yersinia pestis protein is Penicillin-insensitive murein endopeptidase.